A 574-amino-acid chain; its full sequence is MWRRIFAHELKYDQPNASSKNLILSVLNTTATKREAKDYLSKYTNDSGQHNHCLFFIRDLHKVAPAILSQFSSVIKRLGMLGLRPMFVIPPSPTHVNIQAELLDSIVTEADLKPLHLKEGLTKSRTGLYHSVFSQESRFFDIGNSNFIPIVKPYVYNEETASEFMTKDVVKFMDCLCQGNIPHIDKFFILNNAGGIPSGERNDNAHVFINLSQELEHLSSSLSHNISTLTKREPRSQNLLHRMEVYVKKDEISSLECEYHDHLENLLLMDKVLSNLAATATGLITTVKAAALSSDRKNPLVYNLLTDRSLISSSLPRFKKKDGEIDSPANMFDDHAWYELPSQQVNAAPSNSDAVLVTTVLKKGVHIKTYDYKTLTQFNSIGLPKKFHVPEKGAKPSSNSPKLDINKFKSIIDQSFKRSLDLHDYIKRINGKIATIIVIGDYEGIAILTYEGSEENSFVYLDKFAVLPHLKGSLGISDIIFNLMFKKFPNEILWRSRKDNVVNKWYFQRSVAVLDLSIDLDPEHCDEKQSQFKLFYYGNPQYAKRALRDKKRLREFMRSVRDIKPSWENEKNIS.

The N-terminal 13 residues, 1–13 (MWRRIFAHELKYD), are a transit peptide targeting the mitochondrion. An N-acetyltransferase domain is found at 392 to 560 (KGAKPSSNSP…KRLREFMRSV (169 aa)).

It belongs to the acetyltransferase family. Interacts with the acetylglutamate kinase chain of AGR5,6.

It is found in the mitochondrion. It carries out the reaction L-glutamate + acetyl-CoA = N-acetyl-L-glutamate + CoA + H(+). Its pathway is amino-acid biosynthesis; L-arginine biosynthesis; N(2)-acetyl-L-ornithine from L-glutamate: step 1/4. Feedback inhibition by L-arginine. Functionally, N-acetylglutamate synthase involved in arginine biosynthesis. In Saccharomyces cerevisiae (strain RM11-1a) (Baker's yeast), this protein is Amino-acid acetyltransferase, mitochondrial (ARG2).